Consider the following 374-residue polypeptide: Proteinase-activated receptor 3 (374 aa).

The N-terminal stretch at 1-21 is a signal peptide; it reads MKALIFAAAGLLLLLPTFCQS. Positions 22–38 are cleaved as a propeptide — removed for receptor activation; the sequence is GMENDTNNLAKPTLPIK. Asn25 and Asn82 each carry an N-linked (GlcNAc...) asparagine glycan. Residues 39 to 94 lie on the Extracellular side of the membrane; the sequence is TFRGAPPNSFEEFPFSALEGWTGATITVKIKCPEESASHLHVKNATMGYLTSSLST. The chain crosses the membrane as a helical span at residues 95–120; that stretch reads KLIPAIYLLVFVVGVPANAVTLWMLF. Residues 121–128 lie on the Cytoplasmic side of the membrane; sequence FRTRSICT. A helical membrane pass occupies residues 129-148; the sequence is TVFYTNLAIADFLFCVTLPF. The Extracellular segment spans residues 149–167; it reads KIAYHLNGNNWVFGEVLCR. An intrachain disulfide couples Cys166 to Cys245. Residues 168-189 form a helical membrane-spanning segment; it reads ATTVIFYGNMYCSILLLACISI. Topologically, residues 190-206 are cytoplasmic; it reads NRYLAIVHPFTYRGLPK. The helical transmembrane segment at 207 to 230 threads the bilayer; sequence HTYALVTCGLVWATVFLYMLPFFI. The Extracellular segment spans residues 231–260; the sequence is LKQEYYLVQPDITTCHDVHNTCESSSPFQL. Residues 261-280 traverse the membrane as a helical segment; it reads YYFISLAFFGFLIPFVLIIY. The Cytoplasmic segment spans residues 281-297; the sequence is CYAAIIRTLNAYDHRWL. The helical transmembrane segment at 298 to 322 threads the bilayer; that stretch reads WYVKASLLILVIFTICFAPSNIILI. The Extracellular portion of the chain corresponds to 323–336; the sequence is IHHANYYYNNTDGL. An N-linked (GlcNAc...) asparagine glycan is attached at Asn331. A helical membrane pass occupies residues 337–361; the sequence is YFIYLIALCLGSLNSCLDPFLYFLM. Residues 362–374 are Cytoplasmic-facing; that stretch reads SKTRNHSTAYLTK.

The protein belongs to the G-protein coupled receptor 1 family. In terms of assembly, interacts with INSC/inscuteable and probably GPSM2. Post-translationally, a proteolytic cleavage generates a new N-terminus that functions as a tethered ligand. In terms of tissue distribution, highest expression in the megakaryocytes of the bone marrow, lower in mature megakaryocytes, in platelets and in a variety of other tissues such as heart and gut.

The protein localises to the cell membrane. In terms of biological role, receptor for activated thrombin coupled to G proteins that stimulate phosphoinositide hydrolysis. The polypeptide is Proteinase-activated receptor 3 (F2RL2) (Homo sapiens (Human)).